The following is a 56-amino-acid chain: Large ribosomal subunit protein bL32 (56 aa).

The disordered stretch occupies residues 1–27; sequence MAVQQNKKSRSRRDMRRSHDALTTAAV. Positions 7–16 are enriched in basic residues; sequence KKSRSRRDMR.

The protein belongs to the bacterial ribosomal protein bL32 family.

This is Large ribosomal subunit protein bL32 from Actinobacillus pleuropneumoniae serotype 7 (strain AP76).